A 628-amino-acid polypeptide reads, in one-letter code: Chaperone protein HtpG (628 aa).

The tract at residues 1–337 is a; substrate-binding; that stretch reads MSEKKYTFET…SADLPLNVSR (337 aa). The b stretch occupies residues 338-554; it reads EILQHNKVID…DYGMSLHMQK (217 aa). The tract at residues 555 to 628 is c; the sequence is MMEEAGQSFM…FVKLVNKYIR (74 aa).

The protein belongs to the heat shock protein 90 family. Homodimer.

It localises to the cytoplasm. In terms of biological role, molecular chaperone. Has ATPase activity. The sequence is that of Chaperone protein HtpG from Francisella tularensis subsp. tularensis (strain FSC 198).